The chain runs to 287 residues: UBX domain-containing protein 1 (287 aa).

The UBA domain occupies methionine 1–histidine 42. Positions aspartate 44–tyrosine 207 are disordered. Composition is skewed to basic and acidic residues over residues cysteine 72 to lysine 114 and lysine 129 to arginine 169. Residues cysteine 72–lysine 164 adopt a coiled-coil conformation. The span at serine 176–proline 197 shows a compositional bias: low complexity. The UBX domain occupies lysine 205 to valine 284.

The protein localises to the cytoplasm. Its function is as follows. Component of a complex required to couple deglycosylation and proteasome-mediated degradation of misfolded proteins in the endoplasmic reticulum that are retrotranslocated in the cytosol. Involved in ubiquitin-proteasome systems. The protein is UBX domain-containing protein 1 (ubxn1) of Xenopus tropicalis (Western clawed frog).